The primary structure comprises 310 residues: Ribosomal protein L11 methyltransferase (310 aa).

4 residues coordinate S-adenosyl-L-methionine: Thr-156, Gly-179, Asp-201, and Asn-246.

This sequence belongs to the methyltransferase superfamily. PrmA family.

It localises to the cytoplasm. The catalysed reaction is L-lysyl-[protein] + 3 S-adenosyl-L-methionine = N(6),N(6),N(6)-trimethyl-L-lysyl-[protein] + 3 S-adenosyl-L-homocysteine + 3 H(+). Functionally, methylates ribosomal protein L11. This is Ribosomal protein L11 methyltransferase from Desulfatibacillum aliphaticivorans.